The primary structure comprises 84 residues: Venom protein SynTx (84 aa).

An N-terminal signal peptide occupies residues 1–19 (TLLLTLVVVTIVCLDLGYT). Intrachain disulfides connect cysteine 22/cysteine 43, cysteine 36/cysteine 61, cysteine 65/cysteine 76, and cysteine 77/cysteine 82.

This sequence belongs to the three-finger toxin family. Short-chain subfamily. Aminergic toxin sub-subfamily. Homodimer; disulfide-linked. In terms of tissue distribution, expressed by the venom gland.

It localises to the secreted. Functionally, this protein shows a synergetic toxic effect in that it enhances the toxicity of other toxins. This Dendroaspis jamesoni jamesoni (Jameson's mamba) protein is Venom protein SynTx.